Reading from the N-terminus, the 267-residue chain is Pyridoxine 5'-phosphate synthase (267 aa).

Asparagine 8 is a 3-amino-2-oxopropyl phosphate binding site. 10–11 (DH) serves as a coordination point for 1-deoxy-D-xylulose 5-phosphate. Arginine 19 lines the 3-amino-2-oxopropyl phosphate pocket. Histidine 44 acts as the Proton acceptor in catalysis. Positions 46 and 51 each coordinate 1-deoxy-D-xylulose 5-phosphate. Glutamate 71 functions as the Proton acceptor in the catalytic mechanism. Threonine 101 is a binding site for 1-deoxy-D-xylulose 5-phosphate. Histidine 219 functions as the Proton donor in the catalytic mechanism. 3-amino-2-oxopropyl phosphate contacts are provided by residues glycine 220 and 241–242 (GH).

Belongs to the PNP synthase family. In terms of assembly, homooctamer; tetramer of dimers.

Its subcellular location is the cytoplasm. It catalyses the reaction 3-amino-2-oxopropyl phosphate + 1-deoxy-D-xylulose 5-phosphate = pyridoxine 5'-phosphate + phosphate + 2 H2O + H(+). The protein operates within cofactor biosynthesis; pyridoxine 5'-phosphate biosynthesis; pyridoxine 5'-phosphate from D-erythrose 4-phosphate: step 5/5. Its function is as follows. Catalyzes the complicated ring closure reaction between the two acyclic compounds 1-deoxy-D-xylulose-5-phosphate (DXP) and 3-amino-2-oxopropyl phosphate (1-amino-acetone-3-phosphate or AAP) to form pyridoxine 5'-phosphate (PNP) and inorganic phosphate. This is Pyridoxine 5'-phosphate synthase from Helicobacter hepaticus (strain ATCC 51449 / 3B1).